The sequence spans 231 residues: Cytidylate kinase (231 aa).

Position 11–19 (11–19 (GHSSCGKST)) interacts with ATP.

Belongs to the cytidylate kinase family. Type 1 subfamily.

The protein resides in the cytoplasm. It carries out the reaction CMP + ATP = CDP + ADP. It catalyses the reaction dCMP + ATP = dCDP + ADP. The chain is Cytidylate kinase from Porphyromonas gingivalis (strain ATCC BAA-308 / W83).